The following is a 1520-amino-acid chain: DNA topoisomerase 2 top-2 (1520 aa).

Positions 1–10 (MSDSDSEFSI) are enriched in acidic residues. A disordered region spans residues 1-40 (MSDSDSEFSIEDSPKKKTAPKKEKASPKKKKDDANESMVM). A compositionally biased stretch (basic and acidic residues) spans 12–34 (DSPKKKTAPKKEKASPKKKKDDA). Residues Asn126, Asn155, 183 to 185 (SSN), 196 to 203 (GRNGYGAK), and 411 to 413 (QTK) contribute to the ATP site. Residues 490–607 (CTLILTEGDS…SLIQRNFVEE (118 aa)) enclose the Toprim domain. Mg(2+) is bound by residues Glu496, Asp576, and Asp578. The Topo IIA-type catalytic domain maps to 750–1219 (IPCLVDGFKP…TWQDLWHEDL (470 aa)). The active-site O-(5'-phospho-DNA)-tyrosine intermediate is the Tyr840. The tract at residues 1249-1520 (AADAKTGRGP…RGRVVDSDSD (272 aa)) is disordered. Residues 1283-1320 (TKAKYEKMSQPKKERVKKEPKEPKEPKKVKKEGQDIKK) are compositionally biased toward basic and acidic residues. Residues 1342–1364 (MSEESDVEFDEGIDFDSDDDGVE) are compositionally biased toward acidic residues.

This sequence belongs to the type II topoisomerase family. Homodimer. Interacts with nmad-1; the interaction is required for localization of top-2 to DNA. Interacts with gcna-1; this interaction allows the resolution of topoisomerase 2 DNA-protein cross-links. Mg(2+) is required as a cofactor. Mn(2+) serves as cofactor. It depends on Ca(2+) as a cofactor. As to expression, expressed in the hermaphrodite and male germline.

It localises to the nucleus. It is found in the nucleoplasm. Its subcellular location is the chromosome. The protein localises to the cytoplasm. The protein resides in the cytoskeleton. It localises to the spindle. It catalyses the reaction ATP-dependent breakage, passage and rejoining of double-stranded DNA.. Its function is as follows. Control of topological states of DNA by transient breakage and subsequent rejoining of DNA strands. Topoisomerase II makes double-strand breaks. Essential during mitosis in the adult germline and during embryogenesis for proper segregation of daughter chromosomes. Required for centromere resolution during mitosis. Required for chromosome segregation in anaphase of meiosis I during spermatogenesis. Promotes cleavage furrow stability during cytokinesis upon the presence of chromatin obstructions. Promotes DNA break formation upon zygotic genome activation in the Z2 and Z3 primordial germ cells in L1 larvae, thereby activating a checkpoint response. Essential for embryogenesis. This chain is DNA topoisomerase 2 top-2, found in Caenorhabditis elegans.